A 125-amino-acid polypeptide reads, in one-letter code: Large ribosomal subunit protein bL19 (125 aa).

This sequence belongs to the bacterial ribosomal protein bL19 family.

In terms of biological role, this protein is located at the 30S-50S ribosomal subunit interface and may play a role in the structure and function of the aminoacyl-tRNA binding site. This Wolbachia sp. subsp. Brugia malayi (strain TRS) protein is Large ribosomal subunit protein bL19.